A 1727-amino-acid chain; its full sequence is DNA-directed RNA polymerase II subunit rpb1 (1727 aa).

8 residues coordinate Zn(2+): cysteine 66, cysteine 69, cysteine 76, histidine 79, cysteine 106, cysteine 109, cysteine 147, and cysteine 175. The Mg(2+) site is built by aspartate 486, aspartate 488, and aspartate 490. Residues 819 to 831 (PQEFFFHAMGGRE) form a bridging helix region. Lysine 1266 participates in a covalent cross-link: Glycyl lysine isopeptide (Lys-Gly) (interchain with G-Cter in ubiquitin). 2 disordered regions span residues 1478–1512 (EPSN…YDAP) and 1551–1727 (PTYS…NKKK). A compositionally biased stretch (polar residues) spans 1480 to 1505 (SNVSYPDTPGSQTPSYSYGDGSTTPF). A run of 23 repeats spans residues 1553–1559 (YSPTSPS), 1560–1566 (YSPTSPS), 1567–1573 (YSPTSPS), 1574–1580 (YSPTSPS), 1581–1587 (YSPTSPS), 1588–1594 (YSPTSPS), 1595–1601 (YSPTSPF), 1602–1608 (YSPTSPS), 1609–1615 (YSPTSPS), 1616–1622 (YSPTSPS), 1623–1629 (YSPTSPS), 1630–1636 (YSPTSPS), 1637–1643 (YSPTSPS), 1644–1650 (YSPTSPS), 1651–1657 (YSPTSPS), 1658–1664 (YSPTSPS), 1665–1671 (YSPTSPS), 1672–1678 (YSPTSPS), 1679–1685 (YSPTSPS), 1686–1692 (YSPSSPS), 1693–1699 (YSPSSPS), 1700–1706 (YSPSSPS), and 1707–1713 (YSPSSPT). The interval 1553–1713 (YSPTSPSYSP…SPSYSPSSPT (161 aa)) is C-terminal domain (CTD); 23 X 7 AA tandem repeats of Y-S-P-[ST]-S-P-[FST].

It belongs to the RNA polymerase beta' chain family. Component of the RNA polymerase II (Pol II) complex consisting of 12 subunits. In terms of processing, the tandem heptapeptide repeats in the C-terminal domain (CTD) can be highly phosphorylated. The phosphorylation activates Pol II. Phosphorylation occurs mainly at residues 'Ser-2' and 'Ser-5' of the heptapeptide repeat. The phosphorylation state is believed to result from the balanced action of site-specific CTD kinases and phosphatase, and a 'CTD code' that specifies the position of Pol II within the transcription cycle has been proposed. Post-translationally, following transcription stress, the elongating form of RNA polymerase II (RNA pol IIo) is polyubiquitinated via 'Lys-63'-linkages on Lys-1266 at DNA damage sites without leading to degradation: ubiquitination promotes RNA pol IIo backtracking to allow access by the transcription-coupled nucleotide excision repair (TC-NER) machinery. Subsequent DEF1-dependent polyubiquitination by the elongin complex via 'Lys-48'-linkages may lead to proteasome-mediated degradation; presumably at stalled RNA pol II where TC-NER has failed, to halt global transcription and enable 'last resort' DNA repair pathways.

It is found in the nucleus. It catalyses the reaction RNA(n) + a ribonucleoside 5'-triphosphate = RNA(n+1) + diphosphate. In terms of biological role, DNA-dependent RNA polymerase catalyzes the transcription of DNA into RNA using the four ribonucleoside triphosphates as substrates. Largest and catalytic component of RNA polymerase II which synthesizes mRNA precursors and many functional non-coding RNAs. Forms the polymerase active center together with the second largest subunit. Pol II is the central component of the basal RNA polymerase II transcription machinery. It is composed of mobile elements that move relative to each other. RPB1 is part of the core element with the central large cleft, the clamp element that moves to open and close the cleft and the jaws that are thought to grab the incoming DNA template. At the start of transcription, a single-stranded DNA template strand of the promoter is positioned within the central active site cleft of Pol II. A bridging helix emanates from RPB1 and crosses the cleft near the catalytic site and is thought to promote translocation of Pol II by acting as a ratchet that moves the RNA-DNA hybrid through the active site by switching from straight to bent conformations at each step of nucleotide addition. During transcription elongation, Pol II moves on the template as the transcript elongates. Elongation is influenced by the phosphorylation status of the C-terminal domain (CTD) of Pol II largest subunit (RPB1), which serves as a platform for assembly of factors that regulate transcription initiation, elongation, termination and mRNA processing. In Dictyostelium discoideum (Social amoeba), this protein is DNA-directed RNA polymerase II subunit rpb1 (polr2a).